The sequence spans 354 residues: UDP-N-acetylglucosamine--N-acetylmuramyl-(pentapeptide) pyrophosphoryl-undecaprenol N-acetylglucosamine transferase (354 aa).

UDP-N-acetyl-alpha-D-glucosamine is bound by residues 15–17 (TGG), Asn127, Arg163, Ser191, Ile244, 263–268 (ALTVSE), and Gln288.

Belongs to the glycosyltransferase 28 family. MurG subfamily.

The protein resides in the cell inner membrane. It catalyses the reaction di-trans,octa-cis-undecaprenyl diphospho-N-acetyl-alpha-D-muramoyl-L-alanyl-D-glutamyl-meso-2,6-diaminopimeloyl-D-alanyl-D-alanine + UDP-N-acetyl-alpha-D-glucosamine = di-trans,octa-cis-undecaprenyl diphospho-[N-acetyl-alpha-D-glucosaminyl-(1-&gt;4)]-N-acetyl-alpha-D-muramoyl-L-alanyl-D-glutamyl-meso-2,6-diaminopimeloyl-D-alanyl-D-alanine + UDP + H(+). It functions in the pathway cell wall biogenesis; peptidoglycan biosynthesis. Its function is as follows. Cell wall formation. Catalyzes the transfer of a GlcNAc subunit on undecaprenyl-pyrophosphoryl-MurNAc-pentapeptide (lipid intermediate I) to form undecaprenyl-pyrophosphoryl-MurNAc-(pentapeptide)GlcNAc (lipid intermediate II). This Serratia proteamaculans (strain 568) protein is UDP-N-acetylglucosamine--N-acetylmuramyl-(pentapeptide) pyrophosphoryl-undecaprenol N-acetylglucosamine transferase.